The sequence spans 253 residues: Indole-3-glycerol phosphate synthase (253 aa).

This sequence belongs to the TrpC family.

It catalyses the reaction 1-(2-carboxyphenylamino)-1-deoxy-D-ribulose 5-phosphate + H(+) = (1S,2R)-1-C-(indol-3-yl)glycerol 3-phosphate + CO2 + H2O. It functions in the pathway amino-acid biosynthesis; L-tryptophan biosynthesis; L-tryptophan from chorismate: step 4/5. This is Indole-3-glycerol phosphate synthase from Bacillus cereus (strain G9842).